The following is a 477-amino-acid chain: Glycogen synthase (477 aa).

Lys15 is an ADP-alpha-D-glucose binding site.

This sequence belongs to the glycosyltransferase 1 family. Bacterial/plant glycogen synthase subfamily.

It catalyses the reaction [(1-&gt;4)-alpha-D-glucosyl](n) + ADP-alpha-D-glucose = [(1-&gt;4)-alpha-D-glucosyl](n+1) + ADP + H(+). It functions in the pathway glycan biosynthesis; glycogen biosynthesis. Functionally, synthesizes alpha-1,4-glucan chains using ADP-glucose. In Shigella sonnei (strain Ss046), this protein is Glycogen synthase.